The following is a 295-amino-acid chain: RNA polymerase sigma factor RpoH (295 aa).

The interval 52-121 (MVTSHLRLVA…IQEYILRSWS (70 aa)) is sigma-70 factor domain-2. An Interaction with polymerase core subunit RpoC motif is present at residues 76 to 79 (EVIS). The segment at 230–281 (AMVELTDRERHILTERRLKDDPTTLEELAAQYGVSRERVRQIEVRAFEKLQK) is sigma-70 factor domain-4. Positions 254-273 (LEELAAQYGVSRERVRQIEV) form a DNA-binding region, H-T-H motif.

This sequence belongs to the sigma-70 factor family. RpoH subfamily. Interacts with the RNA polymerase core enzyme.

The protein localises to the cytoplasm. Sigma factors are initiation factors that promote the attachment of RNA polymerase to specific initiation sites and are then released. This sigma factor is involved in regulation of expression of heat shock genes. This is RNA polymerase sigma factor RpoH from Caulobacter vibrioides (strain ATCC 19089 / CIP 103742 / CB 15) (Caulobacter crescentus).